Consider the following 129-residue polypeptide: Ribosome-binding factor A (129 aa).

This sequence belongs to the RbfA family. In terms of assembly, monomer. Binds 30S ribosomal subunits, but not 50S ribosomal subunits or 70S ribosomes.

The protein resides in the cytoplasm. Its function is as follows. One of several proteins that assist in the late maturation steps of the functional core of the 30S ribosomal subunit. Associates with free 30S ribosomal subunits (but not with 30S subunits that are part of 70S ribosomes or polysomes). Required for efficient processing of 16S rRNA. May interact with the 5'-terminal helix region of 16S rRNA. The chain is Ribosome-binding factor A from Pseudomonas aeruginosa (strain UCBPP-PA14).